The following is a 242-amino-acid chain: UPF0246 protein SPN23F15130 (242 aa).

It belongs to the UPF0246 family.

The sequence is that of UPF0246 protein SPN23F15130 from Streptococcus pneumoniae (strain ATCC 700669 / Spain 23F-1).